Reading from the N-terminus, the 117-residue chain is Crustacean hyperglycemic hormones 3 (117 aa).

An N-terminal signal peptide occupies residues 1-24; sequence MVTPRMLSALSAVLLLVLTASSSA. 3 disulfides stabilise this stretch: Cys-50/Cys-86, Cys-66/Cys-82, and Cys-69/Cys-95. At Val-115 the chain carries Valine amide.

Belongs to the arthropod CHH/MIH/GIH/VIH hormone family. In terms of tissue distribution, produced by the medulla terminalis X-organ in the eyestalks and transported to the sinus gland where they are stored and released.

The protein resides in the secreted. In terms of biological role, hormone found in the sinus gland of isopods and decapods which controls the blood sugar level. Has a secretagogue action over the amylase released from the midgut gland. May act as a stress hormone and may be involved in the control of molting and reproduction. The polypeptide is Crustacean hyperglycemic hormones 3 (Penaeus japonicus (Kuruma prawn)).